Reading from the N-terminus, the 294-residue chain is Elongation factor Ts (294 aa).

Positions 82–85 (TDFV) are involved in Mg(2+) ion dislocation from EF-Tu.

Belongs to the EF-Ts family.

The protein resides in the cytoplasm. Associates with the EF-Tu.GDP complex and induces the exchange of GDP to GTP. It remains bound to the aminoacyl-tRNA.EF-Tu.GTP complex up to the GTP hydrolysis stage on the ribosome. The polypeptide is Elongation factor Ts (Nitrosomonas eutropha (strain DSM 101675 / C91 / Nm57)).